A 212-amino-acid polypeptide reads, in one-letter code: MKVDLTGLRREFTQSGLNRTDLDNSPFGQFNLWFEQAQKADIIEPSAMSLATSDNNEIGIRTVLLKYFDMYGFVFFTNYNSKKSKELQSNPNVALLFPWLVLERQVKISGYVEKISMLESLKYFSSRPKASQLGSWASQQSSSLSSRKVLLSQFELMKVKFSNGKVPLPDFWGGYRVVPLKIEFWQGRENRLHDRFIYQLNKGKWRIERLAP.

FMN contacts are provided by residues 61 to 66 (RTVLLK), 76 to 77 (FT), Lys82, Lys83, and Gln105. Lys66 lines the substrate pocket. Substrate is bound by residues Tyr123, Arg127, and Ser131. Residues 140–141 (QS) and Trp185 contribute to the FMN site. 191–193 (RLH) contributes to the substrate binding site. Arg195 contributes to the FMN binding site.

It belongs to the pyridoxamine 5'-phosphate oxidase family. Homodimer. FMN serves as cofactor.

The enzyme catalyses pyridoxamine 5'-phosphate + O2 + H2O = pyridoxal 5'-phosphate + H2O2 + NH4(+). It catalyses the reaction pyridoxine 5'-phosphate + O2 = pyridoxal 5'-phosphate + H2O2. Its pathway is cofactor metabolism; pyridoxal 5'-phosphate salvage; pyridoxal 5'-phosphate from pyridoxamine 5'-phosphate: step 1/1. The protein operates within cofactor metabolism; pyridoxal 5'-phosphate salvage; pyridoxal 5'-phosphate from pyridoxine 5'-phosphate: step 1/1. Its function is as follows. Catalyzes the oxidation of either pyridoxine 5'-phosphate (PNP) or pyridoxamine 5'-phosphate (PMP) into pyridoxal 5'-phosphate (PLP). The chain is Pyridoxine/pyridoxamine 5'-phosphate oxidase from Vesicomyosocius okutanii subsp. Calyptogena okutanii (strain HA).